The chain runs to 180 residues: Shikimate kinase (180 aa).

14-19 (GAGKSS) serves as a coordination point for ATP. Residue serine 18 coordinates Mg(2+). The substrate site is built by aspartate 36, arginine 60, and glycine 82. Arginine 120 contacts ATP. Arginine 139 contacts substrate.

This sequence belongs to the shikimate kinase family. As to quaternary structure, monomer. Requires Mg(2+) as cofactor.

Its subcellular location is the cytoplasm. It catalyses the reaction shikimate + ATP = 3-phosphoshikimate + ADP + H(+). It participates in metabolic intermediate biosynthesis; chorismate biosynthesis; chorismate from D-erythrose 4-phosphate and phosphoenolpyruvate: step 5/7. Catalyzes the specific phosphorylation of the 3-hydroxyl group of shikimic acid using ATP as a cosubstrate. The sequence is that of Shikimate kinase from Xylella fastidiosa (strain 9a5c).